The sequence spans 564 residues: Eukaryotic translation initiation factor 3 subunit L (564 aa).

Ser-2 is subject to N-acetylserine. Positions 331 to 537 constitute a PCI domain; the sequence is DAIRVFANIL…IHIADTKVAR (207 aa). N6-acetyllysine occurs at positions 465 and 549.

This sequence belongs to the eIF-3 subunit L family. As to quaternary structure, component of the eukaryotic translation initiation factor 3 (eIF-3) complex, which is composed of 13 subunits: EIF3A, EIF3B, EIF3C, EIF3D, EIF3E, EIF3F, EIF3G, EIF3H, EIF3I, EIF3J, EIF3K, EIF3L and EIF3M. The eIF-3 complex appears to include 3 stable modules: module A is composed of EIF3A, EIF3B, EIF3G and EIF3I; module B is composed of EIF3F, EIF3H, and EIF3M; and module C is composed of EIF3C, EIF3D, EIF3E, EIF3K and EIF3L. EIF3C of module C binds EIF3B of module A and EIF3H of module B, thereby linking the three modules. EIF3J is a labile subunit that binds to the eIF-3 complex via EIF3B. The eIF-3 complex may interact with RPS6KB1 under conditions of nutrient depletion. Mitogenic stimulation may lead to binding and activation of a complex composed of MTOR and RPTOR, leading to phosphorylation and release of RPS6KB1 and binding of EIF4B to eIF-3. Interacts with RRN3.

It is found in the cytoplasm. Component of the eukaryotic translation initiation factor 3 (eIF-3) complex, which is required for several steps in the initiation of protein synthesis. The eIF-3 complex associates with the 40S ribosome and facilitates the recruitment of eIF-1, eIF-1A, eIF-2:GTP:methionyl-tRNAi and eIF-5 to form the 43S pre-initiation complex (43S PIC). The eIF-3 complex stimulates mRNA recruitment to the 43S PIC and scanning of the mRNA for AUG recognition. The eIF-3 complex is also required for disassembly and recycling of post-termination ribosomal complexes and subsequently prevents premature joining of the 40S and 60S ribosomal subunits prior to initiation. The eIF-3 complex specifically targets and initiates translation of a subset of mRNAs involved in cell proliferation, including cell cycling, differentiation and apoptosis, and uses different modes of RNA stem-loop binding to exert either translational activation or repression. The protein is Eukaryotic translation initiation factor 3 subunit L (Eif3l) of Mus musculus (Mouse).